The chain runs to 108 residues: Ribonuclease P protein component 4 (108 aa).

4 residues coordinate Zn(2+): cysteine 60, cysteine 63, cysteine 86, and cysteine 89.

The protein belongs to the eukaryotic/archaeal RNase P protein component 4 family. As to quaternary structure, consists of a catalytic RNA component and at least 4-5 protein subunits. Requires Zn(2+) as cofactor.

The protein localises to the cytoplasm. The enzyme catalyses Endonucleolytic cleavage of RNA, removing 5'-extranucleotides from tRNA precursor.. Its function is as follows. Part of ribonuclease P, a protein complex that generates mature tRNA molecules by cleaving their 5'-ends. The protein is Ribonuclease P protein component 4 of Sulfurisphaera tokodaii (strain DSM 16993 / JCM 10545 / NBRC 100140 / 7) (Sulfolobus tokodaii).